A 262-amino-acid polypeptide reads, in one-letter code: Thiazole synthase (262 aa).

K97 (schiff-base intermediate with DXP) is an active-site residue. Residues G158, A185–G186, and N207–T208 each bind 1-deoxy-D-xylulose 5-phosphate. The tract at residues D243–Y262 is disordered.

It belongs to the ThiG family. In terms of assembly, homotetramer. Forms heterodimers with either ThiH or ThiS.

Its subcellular location is the cytoplasm. It carries out the reaction [ThiS sulfur-carrier protein]-C-terminal-Gly-aminoethanethioate + 2-iminoacetate + 1-deoxy-D-xylulose 5-phosphate = [ThiS sulfur-carrier protein]-C-terminal Gly-Gly + 2-[(2R,5Z)-2-carboxy-4-methylthiazol-5(2H)-ylidene]ethyl phosphate + 2 H2O + H(+). The protein operates within cofactor biosynthesis; thiamine diphosphate biosynthesis. Catalyzes the rearrangement of 1-deoxy-D-xylulose 5-phosphate (DXP) to produce the thiazole phosphate moiety of thiamine. Sulfur is provided by the thiocarboxylate moiety of the carrier protein ThiS. In vitro, sulfur can be provided by H(2)S. This Neisseria meningitidis serogroup C (strain 053442) protein is Thiazole synthase.